Consider the following 755-residue polypeptide: von Willebrand factor A domain-containing protein 2 (755 aa).

The signal sequence occupies residues 1 to 23 (MPPFLLLEAVCVFLFSRVPPSLP). A VWFA 1 domain is found at 51–222 (DIMFLLDGSN…DATNGLFSTL (172 aa)). Residue Asn-147 is glycosylated (N-linked (GlcNAc...) asparagine). Residues 296–333 (PGPCDSQPCQNGGTCVPEGLDGYQCLCPLAFGGEANCA) form the EGF-like 1 domain. 3 disulfides stabilise this stretch: Cys-299/Cys-310, Cys-304/Cys-320, and Cys-322/Cys-332. VWFA domains are found at residues 343 to 517 (DLLF…QGKL) and 531 to 705 (DLVF…IEWL). In terms of domain architecture, EGF-like 2 spans 712–748 (PVNLCKPSPCMNEGSCVLQNGSYRCKCRDGWEGPHCE). Intrachain disulfides connect Cys-716–Cys-727, Cys-721–Cys-736, and Cys-738–Cys-747.

As to quaternary structure, forms monomers and multimers. A 55 kDa form is produced by proteolytic cleavage. Expression is generally absent in normal colon and other normal body tissues, but it is induced an average of 78-fold in Stage II, III, and IV colon cancers, as well as in colon adenomas and colon cancer cell lines.

It is found in the secreted. In Homo sapiens (Human), this protein is von Willebrand factor A domain-containing protein 2 (VWA2).